Consider the following 340-residue polypeptide: Ferredoxin--NADP reductase (340 aa).

FAD contacts are provided by Asp33, Gln41, Tyr46, Ala86, Phe120, Asp286, and Thr327.

Belongs to the ferredoxin--NADP reductase type 2 family. In terms of assembly, homodimer. The cofactor is FAD.

It catalyses the reaction 2 reduced [2Fe-2S]-[ferredoxin] + NADP(+) + H(+) = 2 oxidized [2Fe-2S]-[ferredoxin] + NADPH. The polypeptide is Ferredoxin--NADP reductase (Rickettsia rickettsii (strain Sheila Smith)).